A 358-amino-acid polypeptide reads, in one-letter code: Probable protein phosphatase 2C 34 (358 aa).

Residues 62 to 349 enclose the PPM-type phosphatase domain; sequence LASVFSRRGE…DDISAVCLFF (288 aa). 4 residues coordinate Mn(2+): Asp-98, Gly-99, Asp-294, and Asp-340.

Belongs to the PP2C family. Mg(2+) is required as a cofactor. It depends on Mn(2+) as a cofactor.

The enzyme catalyses O-phospho-L-seryl-[protein] + H2O = L-seryl-[protein] + phosphate. It carries out the reaction O-phospho-L-threonyl-[protein] + H2O = L-threonyl-[protein] + phosphate. This is Probable protein phosphatase 2C 34 from Arabidopsis thaliana (Mouse-ear cress).